The primary structure comprises 662 residues: DNA ligase (662 aa).

NAD(+) is bound by residues 34-38 (DYDYD), 83-84 (SI), and Glu113. The active-site N6-AMP-lysine intermediate is Lys115. Residues Arg136, Glu172, Lys286, and Lys310 each contribute to the NAD(+) site. Cys404, Cys407, Cys422, and Cys427 together coordinate Zn(2+). Residues 583–662 (RESSSCLGKT…NDLLKILYPN (80 aa)) enclose the BRCT domain.

It belongs to the NAD-dependent DNA ligase family. LigA subfamily. Mg(2+) serves as cofactor. Requires Mn(2+) as cofactor.

It catalyses the reaction NAD(+) + (deoxyribonucleotide)n-3'-hydroxyl + 5'-phospho-(deoxyribonucleotide)m = (deoxyribonucleotide)n+m + AMP + beta-nicotinamide D-nucleotide.. Functionally, DNA ligase that catalyzes the formation of phosphodiester linkages between 5'-phosphoryl and 3'-hydroxyl groups in double-stranded DNA using NAD as a coenzyme and as the energy source for the reaction. It is essential for DNA replication and repair of damaged DNA. This is DNA ligase from Chlamydia caviae (strain ATCC VR-813 / DSM 19441 / 03DC25 / GPIC) (Chlamydophila caviae).